A 223-amino-acid chain; its full sequence is ATP-dependent dethiobiotin synthetase BioD (223 aa).

Residue threonine 16 coordinates Mg(2+). The active site involves lysine 37. Serine 41 contributes to the substrate binding site. Residues aspartate 50 and glutamate 111 each coordinate Mg(2+). Residues aspartate 50, glutamate 111–glycine 114, and asparagine 171–arginine 172 contribute to the ATP site.

It belongs to the dethiobiotin synthetase family. In terms of assembly, homodimer. The cofactor is Mg(2+).

It localises to the cytoplasm. The enzyme catalyses (7R,8S)-7,8-diammoniononanoate + CO2 + ATP = (4R,5S)-dethiobiotin + ADP + phosphate + 3 H(+). It functions in the pathway cofactor biosynthesis; biotin biosynthesis; biotin from 7,8-diaminononanoate: step 1/2. Functionally, catalyzes a mechanistically unusual reaction, the ATP-dependent insertion of CO2 between the N7 and N8 nitrogen atoms of 7,8-diaminopelargonic acid (DAPA, also called 7,8-diammoniononanoate) to form a ureido ring. This Anaeromyxobacter dehalogenans (strain 2CP-1 / ATCC BAA-258) protein is ATP-dependent dethiobiotin synthetase BioD.